The primary structure comprises 88 residues: UPF0297 protein SAK_2030 (88 aa).

This sequence belongs to the UPF0297 family.

The protein is UPF0297 protein SAK_2030 of Streptococcus agalactiae serotype Ia (strain ATCC 27591 / A909 / CDC SS700).